Reading from the N-terminus, the 560-residue chain is Oxygen-dependent choline dehydrogenase (560 aa).

6–35 (DYIIIGGGSAGSVLGGRLSEDVSNNVLVLE) contributes to the FAD binding site. His-472 acts as the Proton acceptor in catalysis.

This sequence belongs to the GMC oxidoreductase family. Requires FAD as cofactor.

The catalysed reaction is choline + A = betaine aldehyde + AH2. The enzyme catalyses betaine aldehyde + NAD(+) + H2O = glycine betaine + NADH + 2 H(+). It functions in the pathway amine and polyamine biosynthesis; betaine biosynthesis via choline pathway; betaine aldehyde from choline (cytochrome c reductase route): step 1/1. Involved in the biosynthesis of the osmoprotectant glycine betaine. Catalyzes the oxidation of choline to betaine aldehyde and betaine aldehyde to glycine betaine at the same rate. The sequence is that of Oxygen-dependent choline dehydrogenase from Staphylococcus xylosus.